We begin with the raw amino-acid sequence, 119 residues long: MLSNILPLSIGAIFGTTARWLLNLAVPASLSPATGNLFANWTGALLIGIFAETVSHPQWKLLLITGFFGSLTTLSGFSLETVTLLQSNRPASALANIFLHTAGSLLLTWLGLKIGTAVK.

A run of 4 helical transmembrane segments spans residues 5–25 (ILPL…LNLA), 30–50 (LSPA…IGIF), 59–79 (WKLL…GFSL), and 92–112 (SALA…WLGL). Residues glycine 69 and threonine 72 each contribute to the Na(+) site.

Belongs to the fluoride channel Fluc/FEX (TC 1.A.43) family.

It localises to the cell inner membrane. The catalysed reaction is fluoride(in) = fluoride(out). Its activity is regulated as follows. Na(+) is not transported, but it plays an essential structural role and its presence is essential for fluoride channel function. Functionally, fluoride-specific ion channel. Important for reducing fluoride concentration in the cell, thus reducing its toxicity. The protein is Fluoride-specific ion channel FluC of Neisseria gonorrhoeae (strain NCCP11945).